Consider the following 315-residue polypeptide: MNFYKKKPVVIFLMGPTACGKSQLAICLRKYLSIELISVDSALIYRGMDIGTDKPSFSDLYNHPHRLLNIKDPVENYSAAEFQKDVLREIDEIIKLGKIPCLVGGSMFYYNVLLHGLSILPPSNIKLREYLIQKSYEKNYLYKKLKLIDPISASRIHKNDFQRLIRALEIFYLSGKSLTELKKKNNYKLPYNIFQFAIIPPNKEWLNNKIELRIKKMLMLGFQKEVEILFLRGDLHKNLPSIRCIGYRQMWEYLEYKNSYKDMFNKIIHATRKLAKHQLTWLKNWKNINKIEYHSTSTILAKKVLDVLEKNDFSV.

15–22 (GPTACGKS) lines the ATP pocket. 17 to 22 (TACGKS) contacts substrate. Interaction with substrate tRNA stretches follow at residues 40-43 (DSAL) and 162-166 (QRLIR).

The protein belongs to the IPP transferase family. As to quaternary structure, monomer. Requires Mg(2+) as cofactor.

It carries out the reaction adenosine(37) in tRNA + dimethylallyl diphosphate = N(6)-dimethylallyladenosine(37) in tRNA + diphosphate. In terms of biological role, catalyzes the transfer of a dimethylallyl group onto the adenine at position 37 in tRNAs that read codons beginning with uridine, leading to the formation of N6-(dimethylallyl)adenosine (i(6)A). The polypeptide is tRNA dimethylallyltransferase (Buchnera aphidicola subsp. Acyrthosiphon pisum (strain APS) (Acyrthosiphon pisum symbiotic bacterium)).